A 395-amino-acid polypeptide reads, in one-letter code: ATP phosphoribosyltransferase regulatory subunit (395 aa).

The protein belongs to the class-II aminoacyl-tRNA synthetase family. HisZ subfamily. In terms of assembly, heteromultimer composed of HisG and HisZ subunits.

Its subcellular location is the cytoplasm. Its pathway is amino-acid biosynthesis; L-histidine biosynthesis; L-histidine from 5-phospho-alpha-D-ribose 1-diphosphate: step 1/9. Required for the first step of histidine biosynthesis. May allow the feedback regulation of ATP phosphoribosyltransferase activity by histidine. The polypeptide is ATP phosphoribosyltransferase regulatory subunit (Pseudomonas savastanoi pv. phaseolicola (strain 1448A / Race 6) (Pseudomonas syringae pv. phaseolicola (strain 1448A / Race 6))).